The sequence spans 88 residues: Sec-independent protein translocase protein TatA (88 aa).

The chain crosses the membrane as a helical span at residues 1 to 21; the sequence is MGGISIWQLLIIALIVVLLFG. The segment at 43 to 88 is disordered; that stretch reads MSSEEDKKALEDAEAAKPVQTAQTVQSAQPTQQATEKKPESNKEQA. Over residues 46–57 the composition is skewed to basic and acidic residues; that stretch reads EEDKKALEDAEA. Residues 62-76 show a composition bias toward polar residues; it reads QTAQTVQSAQPTQQA. Basic and acidic residues predominate over residues 77-88; it reads TEKKPESNKEQA.

This sequence belongs to the TatA/E family. As to quaternary structure, the Tat system comprises two distinct complexes: a TatABC complex, containing multiple copies of TatA, TatB and TatC subunits, and a separate TatA complex, containing only TatA subunits. Substrates initially bind to the TatABC complex, which probably triggers association of the separate TatA complex to form the active translocon.

It localises to the cell inner membrane. Part of the twin-arginine translocation (Tat) system that transports large folded proteins containing a characteristic twin-arginine motif in their signal peptide across membranes. TatA could form the protein-conducting channel of the Tat system. The protein is Sec-independent protein translocase protein TatA of Shewanella oneidensis (strain ATCC 700550 / JCM 31522 / CIP 106686 / LMG 19005 / NCIMB 14063 / MR-1).